Consider the following 596-residue polypeptide: Uptake hydrogenase large subunit (596 aa).

Ni(2+)-binding residues include Cys75, Cys78, Cys575, and Cys578.

It belongs to the [NiFe]/[NiFeSe] hydrogenase large subunit family. Heterodimer of a large and a small subunit. Ni(2+) serves as cofactor.

The protein resides in the cell membrane. The enzyme catalyses H2 + A = AH2. Its function is as follows. This enzyme recycles the H(2) produced by nitrogenase to increase the production of ATP and to protect nitrogenase against inhibition or damage by O(2) under carbon- or phosphate-limited conditions. The polypeptide is Uptake hydrogenase large subunit (hupB) (Rhizobium leguminosarum bv. viciae).